The primary structure comprises 212 residues: uncharacterized protein (212 aa).

A run of 4 helical transmembrane segments spans residues 34–54 (IFGI…PAPG), 59–79 (FGVL…ELWL), 126–146 (ILMG…IPGT), and 171–191 (AGMI…YVFF).

It to R.meliloti ExoD.

It localises to the cell membrane. This is an uncharacterized protein from Synechocystis sp. (strain ATCC 27184 / PCC 6803 / Kazusa).